The sequence spans 63 residues: Large ribosomal subunit protein bL28 (63 aa).

This sequence belongs to the bacterial ribosomal protein bL28 family.

In Petrotoga mobilis (strain DSM 10674 / SJ95), this protein is Large ribosomal subunit protein bL28.